Consider the following 616-residue polypeptide: MVLPKSKNQIGLGRAIQSDFTKNRRNRKGGLKHIVDSDPKAHRAALRSVTHETDLDEFLNTAELGEVEFIAEKQNVTVIQNPEQNPFLLSKEEAARSKQKQEKNKDRLTIPRRPHWDQTTTAVELDRMERESFLNWRRNLAQLQDVEGFIVTPFERNLEIWRQLWRVIERSDVVVQIVDARNPLFFRSAHLEQYVKEVGPSKKNFLLVNKADMLTEEQRNYWSSYFNENNIPFLFFSARMAAEANERGEDLETYESTSSNEIPESLQADENDVHSSRIATLKVLEGIFEKFASTLPDGKTKMTFGLVGYPNVGKSSTINALVGSKKVSVSSTPGKTKHFQTINLSEKVSLLDCPGLVFPSFATTQADLVLDGVLPIDQLREYTGPSALMAERIPKEVLETLYTIRIRIKPIEEGGTGVPSAQEVLFPFARSRGFMRAHHGTPDDSRAARILLKDYVNGKLLYVHPPPNYPNSGSEFNKEHHQKIVSATSDSITEKLQRTAISDNTLSAESQLVDDEYFQENPHVRPMVKGTAVAMQGPVYKGRNTMQPFQRRLNDDASPKYPMNAQGKPLSRRKARQLTALELGVSPEALSSATSKKHNKKNKRSKQRSGVVIDDY.

A CP-type G domain is found at 161-359; sequence WRQLWRVIER…LLDCPGLVFP (199 aa). 209 to 212 is a binding site for GTP; sequence NKAD. The disordered stretch occupies residues 247 to 269; sequence RGEDLETYESTSSNEIPESLQAD. GTP is bound by residues 308–315 and 352–355; these read GYPNVGKS and DCPG. Disordered regions lie at residues 552 to 574 and 587 to 616; these read RLND…SRRK and PEAL…IDDY. Residues 595 to 607 show a composition bias toward basic residues; sequence SKKHNKKNKRSKQ.

Belongs to the TRAFAC class YlqF/YawG GTPase family. LSG1 subfamily.

Its subcellular location is the cytoplasm. Its function is as follows. GTPase required for the nuclear export of the 60S ribosomal subunit. Acts by mediating the release of nmd3 from the 60S ribosomal subunit after export into the cytoplasm. In Schizosaccharomyces pombe (strain 972 / ATCC 24843) (Fission yeast), this protein is Large subunit GTPase 1 (lsg1).